A 317-amino-acid polypeptide reads, in one-letter code: Uridine phosphorylase 2 (317 aa).

Residues G66, R100, and 144 to 147 each bind phosphate; that span reads RIGT. An intrachain disulfide couples C95 to C102. Uridine contacts are provided by residues 148 to 149 and 223 to 225; these read SG and QGR.

The protein belongs to the PNP/UDP phosphorylase family. As to quaternary structure, homodimer. In terms of tissue distribution, predominantly expressed in kidney.

It catalyses the reaction uridine + phosphate = alpha-D-ribose 1-phosphate + uracil. The catalysed reaction is 2'-deoxyuridine + phosphate = 2-deoxy-alpha-D-ribose 1-phosphate + uracil. It functions in the pathway pyrimidine metabolism; UMP biosynthesis via salvage pathway; uracil from uridine (phosphorylase route): step 1/1. Its activity is regulated as follows. A conditional disulfide bridge can form within the protein that dislocates a critical phosphate-coordinating arginine Arg-100 away from the active site, disabling the enzyme. Catalyzes the reversible phosphorylytic cleavage of uridine to uracil and ribose-1-phosphate which can then be utilized as carbon and energy sources or in the rescue of pyrimidine bases for nucleotide synthesis. Shows broad substrate specificity and can also accept deoxyuridine and other analogous compounds. In Homo sapiens (Human), this protein is Uridine phosphorylase 2.